Here is a 234-residue protein sequence, read N- to C-terminus: Sugar fermentation stimulation protein homolog (234 aa).

This sequence belongs to the SfsA family.

In Shewanella sp. (strain MR-7), this protein is Sugar fermentation stimulation protein homolog.